We begin with the raw amino-acid sequence, 466 residues long: Ribulose bisphosphate carboxylase large chain (466 aa).

K5 carries the post-translational modification N6,N6,N6-trimethyllysine. Residues N114 and T164 each coordinate substrate. Residue K166 is the Proton acceptor of the active site. A substrate-binding site is contributed by K168. Residues K192, D194, and E195 each coordinate Mg(2+). The residue at position 192 (K192) is an N6-carboxylysine. Catalysis depends on H285, which acts as the Proton acceptor. Residues R286, H318, and S370 each coordinate substrate.

This sequence belongs to the RuBisCO large chain family. Type I subfamily. Heterohexadecamer of 8 large chains and 8 small chains; disulfide-linked. The disulfide link is formed within the large subunit homodimers. It depends on Mg(2+) as a cofactor. The disulfide bond which can form in the large chain dimeric partners within the hexadecamer appears to be associated with oxidative stress and protein turnover.

The protein resides in the plastid. It is found in the chloroplast. The enzyme catalyses 2 (2R)-3-phosphoglycerate + 2 H(+) = D-ribulose 1,5-bisphosphate + CO2 + H2O. The catalysed reaction is D-ribulose 1,5-bisphosphate + O2 = 2-phosphoglycolate + (2R)-3-phosphoglycerate + 2 H(+). RuBisCO catalyzes two reactions: the carboxylation of D-ribulose 1,5-bisphosphate, the primary event in carbon dioxide fixation, as well as the oxidative fragmentation of the pentose substrate in the photorespiration process. Both reactions occur simultaneously and in competition at the same active site. The polypeptide is Ribulose bisphosphate carboxylase large chain (Asarum canadense (Wild ginger)).